Reading from the N-terminus, the 274-residue chain is MPFRSNNPLTRDELLSRFFPQFHPVTTFNSGLSGGSFLIEHQGQRFVVRQPHDPDAPQSAFLRQYRALSQLPACIAPKPHLYLRDWMVVDYLPGEVKTYLPDTNELAGLLYYLHQQPRFGWRITLLPLLELYWQQSDPARRTVGWLRMLKRLRKAREPRLLRLSPLHMDVHAGNLVHSASGLKLIDWEYAGDGDIALELAAVWVENIDQHRQLVNDYATRAKIYPAQLWRQVRRWFPWLLMLKAGWFEYRWRQTGDQQFIRLADDTWRQLLIKQ.

This sequence belongs to the thiamine kinase family.

It carries out the reaction thiamine + ATP = thiamine phosphate + ADP + H(+). It functions in the pathway cofactor biosynthesis; thiamine diphosphate biosynthesis; thiamine phosphate from thiamine: step 1/1. Functionally, catalyzes the ATP-dependent phosphorylation of thiamine to thiamine phosphate. Is involved in thiamine salvage. The polypeptide is Thiamine kinase (Escherichia coli O45:K1 (strain S88 / ExPEC)).